The sequence spans 186 residues: Ribosome-recycling factor (186 aa).

A disordered region spans residues 135–162 (DGMDGLKKAEKDGDIGQDESRAQSERVQ).

The protein belongs to the RRF family.

The protein localises to the cytoplasm. Its function is as follows. Responsible for the release of ribosomes from messenger RNA at the termination of protein biosynthesis. May increase the efficiency of translation by recycling ribosomes from one round of translation to another. The chain is Ribosome-recycling factor from Sinorhizobium fredii (strain NBRC 101917 / NGR234).